The chain runs to 62 residues: Large ribosomal subunit protein bL28 (62 aa).

The disordered stretch occupies residues 1–28 (MARVCAITGRKARSGNSRSHAMNATKRK).

The protein belongs to the bacterial ribosomal protein bL28 family.

This Bacillus cytotoxicus (strain DSM 22905 / CIP 110041 / 391-98 / NVH 391-98) protein is Large ribosomal subunit protein bL28.